Here is a 174-residue protein sequence, read N- to C-terminus: Secretory-abundant heat soluble protein 2 (174 aa).

An N-terminal signal peptide occupies residues 1–19; it reads MHRFVLALVVFAGAAIVWA. The SAHS-c1 stretch occupies residues 30-60; that stretch reads EWTGKPWMGKWESDPSKDENVEEFKKKLQLP. The segment at 77–105 is SAHS-c2; that stretch reads YKKGDEYHHKIIINDAHYKNDIVFKLGQE. Asn111 is a glycosylation site (N-linked (GlcNAc...) asparagine). Residues 118–172 are SAHS-c3; the sequence is KYEDKDGALVGSVHYTGTKEQSLDKTINNVFKLEGDHLVKTSTIEGVTMKRHYNK.

This sequence belongs to the Secretory-abundant heat soluble protein (SAHS) family.

The protein resides in the secreted. Functionally, secreted heat soluble protein acting as a molecular shield in water-deficient condition. Tardigrade-specific intrinsically disordered proteins (TDPs) are essential for desiccation tolerance by forming non-crystalline amorphous solids upon desiccation, and this vitrified state mirrors their protective capabilities. This chain is Secretory-abundant heat soluble protein 2, found in Ramazzottius varieornatus (Water bear).